We begin with the raw amino-acid sequence, 596 residues long: MLFPKDTLTREIKDLSGIWRFKADPDNRGREEKWHHQPLQDTIPMPVPASYNDITQDAALRDHIGDVWYEQTFIVPRSWSGDRMMLWIGSACHHAVVWVNGVEVASHKGGFLPFEADITRVAVPGRENRVTIVVNNVLNWQTLPPGRIKTFDDEKHPEGYRVQEYFHDFFNYAGLHRPVKLYRTSGLFIQDITITTDVQGESGVVGYSIECSQPEGEVRVKLLDEDGKEAATGKGSSGTLQVENARLWKPLQAYLYTLHVELLDSYGQLADHYQLQVGIRTVKVEGTRFLINGERFYFKGFGKHEDSDIRGKGLDQAVNVKDFNLLKWINANSFRTSHYPYAEELLELADREGIVVIGEVPAVGFTFFNYNDKVYTPDQANEETLAHHHDVLSDLIARDKNHPSVVMWSLANEAATFQDEAVPYFRQLADTARRLDPQRPITIVQWPLPDKCKVAQFFDVICVNRYYSWYQDPGALELVEHQVEWELTNWYRNFGKPVIMTEYGADAIAGFHQDPPVMFTEEYQEELLTRYHNVFDRLDFVIGEHVWAFADFATKQGITRINGNKKGVFTRQRQPKAAARMLRSRWGEMGEYPEKL.

Residues Asp168 and Asn412 each coordinate D-glucuronate. Glu413 functions as the Proton donor in the catalytic mechanism. The D-glucuronate site is built by Asn464, Tyr470, Glu502, Trp547, and Lys566. Glu502 serves as the catalytic Nucleophile. The N-K motif signature appears at 564–566 (NKK).

This sequence belongs to the glycosyl hydrolase 2 family.

The protein localises to the cytoplasm. It catalyses the reaction a beta-D-glucuronoside + H2O = D-glucuronate + an alcohol. In terms of biological role, displays beta-glucuronidase activity with the artificial substrate p-nitrophenyl-beta-D-glucuronide (PNPG). Is probably involved in the metabolism of oligosaccharides containing the 3-O-beta-D-glucopyranosyl-beta-D-glucuronide structure released from bacterial and plant acidic carbohydrates. The protein is Beta-glucuronidase of Paenibacillus borealis.